A 179-amino-acid polypeptide reads, in one-letter code: Ribosome maturation factor RimP (179 aa).

The protein belongs to the RimP family.

The protein localises to the cytoplasm. Required for maturation of 30S ribosomal subunits. This chain is Ribosome maturation factor RimP, found in Prosthecochloris aestuarii (strain DSM 271 / SK 413).